A 276-amino-acid chain; its full sequence is Tryptophan synthase alpha chain (276 aa).

Catalysis depends on proton acceptor residues Glu-55 and Asp-66.

It belongs to the TrpA family. In terms of assembly, tetramer of two alpha and two beta chains.

The catalysed reaction is (1S,2R)-1-C-(indol-3-yl)glycerol 3-phosphate + L-serine = D-glyceraldehyde 3-phosphate + L-tryptophan + H2O. Its pathway is amino-acid biosynthesis; L-tryptophan biosynthesis; L-tryptophan from chorismate: step 5/5. Functionally, the alpha subunit is responsible for the aldol cleavage of indoleglycerol phosphate to indole and glyceraldehyde 3-phosphate. This chain is Tryptophan synthase alpha chain, found in Gloeobacter violaceus (strain ATCC 29082 / PCC 7421).